The following is a 581-amino-acid chain: ATP-dependent lipid A-core flippase (581 aa).

6 consecutive transmembrane segments (helical) span residues 21–41 (TVAIVAIIGMIGYSGMDALFI), 65–85 (FVVIALVIGRGVFNFMSSYCL), 138–158 (ALLIVVREGAFVVFLLAVMFY), 161–181 (WQLSLIFLVIIPLVAVIVTVV), 246–266 (LSVSIIQVLAASAMAVILWVV), and 271–291 (MIDTISSGDFVVLISSMMMLL). Residues 24-306 (IVAIIGMIGY…LANVNSDMQR (283 aa)) enclose the ABC transmembrane type-1 domain. Residues 338-575 (IEVKNVTFKY…NGTYSALCKM (238 aa)) form the ABC transporter domain. Residue 372 to 379 (GRSGSGKS) coordinates ATP.

The protein belongs to the ABC transporter superfamily. Lipid exporter (TC 3.A.1.106) family. Homodimer.

The protein localises to the cell inner membrane. It catalyses the reaction ATP + H2O + lipid A-core oligosaccharideSide 1 = ADP + phosphate + lipid A-core oligosaccharideSide 2.. Involved in lipopolysaccharide (LPS) biosynthesis. Translocates lipid A-core from the inner to the outer leaflet of the inner membrane. Transmembrane domains (TMD) form a pore in the inner membrane and the ATP-binding domain (NBD) is responsible for energy generation. This is ATP-dependent lipid A-core flippase from Pseudoalteromonas translucida (strain TAC 125).